The sequence spans 284 residues: Polyamine aminopropyltransferase (284 aa).

Residues Lys6–His242 enclose the PABS domain. S-methyl-5'-thioadenosine is bound at residue Gln36. Positions 67 and 91 each coordinate spermidine. S-methyl-5'-thioadenosine is bound by residues Glu111 and Asp142–Gly143. Asp161 acts as the Proton acceptor in catalysis. Residue Asp161–Asp164 coordinates spermidine.

It belongs to the spermidine/spermine synthase family. Homodimer or homotetramer.

The protein localises to the cytoplasm. It catalyses the reaction S-adenosyl 3-(methylsulfanyl)propylamine + putrescine = S-methyl-5'-thioadenosine + spermidine + H(+). It participates in amine and polyamine biosynthesis; spermidine biosynthesis; spermidine from putrescine: step 1/1. In terms of biological role, catalyzes the irreversible transfer of a propylamine group from the amino donor S-adenosylmethioninamine (decarboxy-AdoMet) to putrescine (1,4-diaminobutane) to yield spermidine. The protein is Polyamine aminopropyltransferase of Nitrosococcus oceani (strain ATCC 19707 / BCRC 17464 / JCM 30415 / NCIMB 11848 / C-107).